The following is a 59-amino-acid chain: Protein translocase subunit SecE (59 aa).

The helical transmembrane segment at 30–50 threads the bilayer; the sequence is ITVITTVIFFAIFFALIDSGI.

This sequence belongs to the SecE/SEC61-gamma family. As to quaternary structure, component of the Sec protein translocase complex. Heterotrimer consisting of SecY, SecE and SecG subunits. The heterotrimers can form oligomers, although 1 heterotrimer is thought to be able to translocate proteins. Interacts with the ribosome. Interacts with SecDF, and other proteins may be involved. Interacts with SecA.

It is found in the cell membrane. In terms of biological role, essential subunit of the Sec protein translocation channel SecYEG. Clamps together the 2 halves of SecY. May contact the channel plug during translocation. The polypeptide is Protein translocase subunit SecE (Bacillus licheniformis).